Reading from the N-terminus, the 333-residue chain is Neuropeptides B/W receptor type 2 (333 aa).

Over 1–45 the chain is Extracellular; sequence MQAAGHPEPLDSRGSFSLPTMGANVSQDNGTGHNATFSEPLPFLY. N-linked (GlcNAc...) asparagine glycosylation is found at N24, N29, and N34. The helical transmembrane segment at 46 to 69 threads the bilayer; it reads VLLPAVYSGICAVGLTGNTAVILV. Residues 70–80 are Cytoplasmic-facing; it reads ILRAPKMKTVT. The chain crosses the membrane as a helical span at residues 81 to 105; sequence NVFILNLAVADGLFTLVLPVNIAEH. Residues 106-120 are Extracellular-facing; that stretch reads LLQYWPFGELLCKLV. Residues C117 and C197 are joined by a disulfide bond. The helical transmembrane segment at 121 to 140 threads the bilayer; sequence LAVDHYNIFSSIYFLAVMSV. The Cytoplasmic portion of the chain corresponds to 141-165; it reads DRYLVVLATVRSRHMPWRTYRGAKV. A helical transmembrane segment spans residues 166–185; the sequence is ASLCVWLGVTVLVLPFFSFA. Residues 186–211 lie on the Extracellular side of the membrane; that stretch reads GVYSNELQVPSCGLSFPWPEQVWFKA. Residues 212–233 traverse the membrane as a helical segment; sequence SRVYTLVLGFVLPVCTICVLYT. Topologically, residues 234–257 are cytoplasmic; the sequence is DLLRRLRAVRLRSGAKALGKARRK. Residues 258–282 form a helical membrane-spanning segment; sequence VTVLVLVVLAVCLLCWTPFHLASVV. Residues 283–292 lie on the Extracellular side of the membrane; sequence ALTTDLPQTP. A helical transmembrane segment spans residues 293–307; that stretch reads LVISMSYVITSLSYA. Over 308-333 the chain is Cytoplasmic; the sequence is NSCLNPFLYAFLDDNFRKNFRSILRC.

It belongs to the G-protein coupled receptor 1 family. Detected at high levels in caudate nucleus, hippocampus and amygdala; at moderate levels in the adult brain, thalamus, parietal cortex, pituitary gland, adrenal gland and lymph nodes.

The protein localises to the cell membrane. Interacts specifically with a number of opioid ligands. Receptor for neuropeptides B and W, which may be involved in neuroendocrine system regulation, food intake and the organization of other signals. This is Neuropeptides B/W receptor type 2 (NPBWR2) from Homo sapiens (Human).